The following is an 88-amino-acid chain: Exodeoxyribonuclease 7 small subunit (88 aa).

Belongs to the XseB family. In terms of assembly, heterooligomer composed of large and small subunits.

The protein localises to the cytoplasm. The enzyme catalyses Exonucleolytic cleavage in either 5'- to 3'- or 3'- to 5'-direction to yield nucleoside 5'-phosphates.. Its function is as follows. Bidirectionally degrades single-stranded DNA into large acid-insoluble oligonucleotides, which are then degraded further into small acid-soluble oligonucleotides. The chain is Exodeoxyribonuclease 7 small subunit from Tolumonas auensis (strain DSM 9187 / NBRC 110442 / TA 4).